The primary structure comprises 1053 residues: CRISPR-associated endonuclease Cas9 (1053 aa).

Residues 1-41 (MKRNYILGLDIGITSVGYGIIDYETRDVIDAGVRLFKEANV) are ruvC-I. Asp10 acts as the For RuvC-like nuclease domain in catalysis. Residue Asp10 participates in Mg(2+) binding. Positions 41 to 426 (VENNEGRRSK…IFNRLKLVPK (386 aa)) are recognition lobe. Residues 435–481 (EIPTTLVDDFILSPVVKRSFIQSIKVINAIIKKYGLPNDIIIELARE) form a ruvC-II region. Positions 477 and 481 each coordinate Mg(2+). Residues 480–646 (REKNSKDAQK…VQKDFINRNL (167 aa)) form the HNH Cas9-type domain. Catalysis depends on His557, which acts as the Proton acceptor for HNH nuclease domain. Residues 650 to 775 (RYATRGLMNL…FKDYKYSHRV (126 aa)) form a ruvC-III region. Mg(2+) is bound at residue His701. Tyr789 is a binding site for RNA. 2 PAM substrate-binding regions span residues 882–889 (YYGNKLNA) and 985–993 (NNDLLNRIE). Residues 910–1053 (KPYRFDVYLD…KKHPQIIKKG (144 aa)) form a PAM-interacting domain (PI) region.

This sequence belongs to the CRISPR-associated Cas9 family. Subtype II-A subfamily. Monomer. Binds crRNA and tracrRNA. The cofactor is Mg(2+).

CRISPR (clustered regularly interspaced short palindromic repeat) is an adaptive immune system that provides protection against mobile genetic elements (viruses, transposable elements and conjugative plasmids). CRISPR clusters contain spacers, sequences complementary to antecedent mobile elements, and target invading nucleic acids. CRISPR clusters are transcribed and processed into CRISPR RNA (crRNA). In type II CRISPR systems correct processing of pre-crRNA requires a trans-encoded small RNA (tracrRNA), endogenous ribonuclease 3 (rnc) and this protein. The tracrRNA serves as a guide for ribonuclease 3-aided processing of pre-crRNA. Subsequently Cas9/crRNA/tracrRNA endonucleolytically cleaves linear or circular dsDNA target complementary to the spacer; Cas9 is inactive in the absence of the 2 guide RNAs (gRNA). Cas9 recognizes the protospacer adjacent motif (PAM) in the CRISPR repeat sequences to help distinguish self versus nonself, as targets within the bacterial CRISPR locus do not have PAMs. PAM recognition is also required for catalytic activity. The sequence is that of CRISPR-associated endonuclease Cas9 from Staphylococcus aureus.